Consider the following 597-residue polypeptide: DNA primase (597 aa).

4 residues coordinate Zn(2+): cysteine 40, histidine 43, cysteine 61, and cysteine 64. The CHC2-type zinc-finger motif lies at 40-64; it reads CPFHGEKTPSFSVSPEKQIFHCFGC. The 81-residue stretch at 262–342 folds into the Toprim domain; that stretch reads QEALLVEGFA…RVKVASLPNG (81 aa). Mg(2+)-binding residues include glutamate 268, aspartate 311, and aspartate 313. The span at 429-447 shows a compositional bias: basic and acidic residues; it reads LSRSQRERTKPREAPDGET. Residues 429 to 448 are disordered; sequence LSRSQRERTKPREAPDGETA.

The protein belongs to the DnaG primase family. In terms of assembly, monomer. Interacts with replicative helicase DnaB, as DnaB(6):DnaG(3). A stable complex DnaI(6):DnaB(6):DnaG(3) fragment can be isolated; DnaI and DnaG do not contact each other (DnaI in this complex is derived from B.subtilis). The cofactor is Zn(2+). Mg(2+) is required as a cofactor.

It catalyses the reaction ssDNA + n NTP = ssDNA/pppN(pN)n-1 hybrid + (n-1) diphosphate.. Its function is as follows. RNA polymerase that catalyzes the synthesis of short RNA molecules used as primers for DNA polymerase during DNA replication. The sequence is that of DNA primase from Geobacillus stearothermophilus (Bacillus stearothermophilus).